Consider the following 397-residue polypeptide: Teichoic acid D-alanine hydrolase (397 aa).

An N-terminal signal peptide occupies residues 1–23 (MKFNKVKLVIHACVLLFIIISIA).

It is found in the cell membrane. It catalyses the reaction [(4-D-Ala)-(2-GlcNAc)-Rib-ol-P]n-[Gro-P]m-beta-D-ManNAc-(1-&gt;4)-alpha-D-GlcNAc-P-peptidoglycan + n H2O = [(2-GlcNAc)-Rib-ol-P]n-[Gro-P]m-beta-D-ManNAc-(1-&gt;4)-alpha-D-GlcNAc-P-peptidoglycan + n D-alanine.. In terms of biological role, catalyzes the liberation of D-alanyl moieties present on wall teichoic acid (WTA) and lipoteichoic acid (LTA). Affects the methicillin resistance level and autolysis in the presence of Triton X-100 as well as the cell wall structure. This chain is Teichoic acid D-alanine hydrolase (fmtA), found in Staphylococcus aureus (strain NCTC 8325 / PS 47).